We begin with the raw amino-acid sequence, 409 residues long: Putative actin-fragmin kinase DDB_G0268812 (409 aa).

The disordered stretch occupies residues 1 to 45 (MKTFRDFKKKIKNNNNNKNNKNNNINNNNSNNNKNNKNNNNNNSN). The stretch at 5 to 46 (RDFKKKIKNNNNNKNNKNNNINNNNSNNNKNNKNNNNNNSNN) forms a coiled coil. The span at 13 to 45 (NNNNNKNNKNNNINNNNSNNNKNNKNNNNNNSN) shows a compositional bias: low complexity.

It belongs to the protein kinase superfamily. AFK Ser/Thr protein kinase family.

This chain is Putative actin-fragmin kinase DDB_G0268812, found in Dictyostelium discoideum (Social amoeba).